The chain runs to 567 residues: Zinc finger protein 512 (567 aa).

Residues 1–32 (MSSRLGAVPATSGPTTFKQQRSTRIVGAKNSR) form a disordered region. Polar residues predominate over residues 12 to 23 (SGPTTFKQQRST). Residues lysine 18 and lysine 84 each participate in a glycyl lysine isopeptide (Lys-Gly) (interchain with G-Cter in SUMO2) cross-link. The tract at residues 86-148 (AATSHVEGSG…QARRIRKEPP (63 aa)) is disordered. A compositionally biased stretch (basic residues) spans 119-130 (KKHKLYGRKQRP). The segment at 197–220 (FTCHHCGKQLRSLAGMKYHVMANH) adopts a C2H2-type 1 zinc-finger fold. Lysine 227 participates in a covalent cross-link: Glycyl lysine isopeptide (Lys-Gly) (interchain with G-Cter in SUMO2). The segment at 287–310 (LKCHHCGKPYRSKAGLAYHLRSEH) adopts a C2H2-type 2 zinc-finger fold. Lysine 333 is covalently cross-linked (Glycyl lysine isopeptide (Lys-Gly) (interchain with G-Cter in SUMO2)). Residues 406–430 (IQCPNQGCEAVYSSVSGLKAHLGSC) form a C2H2-type 3; atypical zinc finger. The C2H2-type 4 zinc-finger motif lies at 440–463 (YKCLLCQKEFVSESGVKYHINSVH). Positions 486–567 (QRQQEEEKRR…PKTNHKRGRK (82 aa)) are disordered. The segment covering 495 to 508 (RQQHRSRRSLRRRQ) has biased composition (basic residues). A compositionally biased stretch (basic and acidic residues) spans 523–532 (VGKDQRRNNE). Residues 556–567 (KPPKTNHKRGRK) show a composition bias toward basic residues.

It belongs to the krueppel C2H2-type zinc-finger protein family.

The protein localises to the nucleus. Its function is as follows. May be involved in transcriptional regulation. This is Zinc finger protein 512 (ZNF512) from Homo sapiens (Human).